The following is a 97-amino-acid chain: MSLHRDSMVPVNSRLENMDSPILSKICAWGVMLGLFALSLFAMAYACYHKQTSNSCIEEKQGKKQVLKPLDMEPKIVVIMAGNENPTFFAKPTQINA.

At 1–25 (MSLHRDSMVPVNSRLENMDSPILSK) the chain is on the extracellular side. A helical membrane pass occupies residues 26-46 (ICAWGVMLGLFALSLFAMAYA). At 47–97 (CYHKQTSNSCIEEKQGKKQVLKPLDMEPKIVVIMAGNENPTFFAKPTQINA) the chain is on the cytoplasmic side. The VIMAG signature appears at 78-82 (VIMAG).

This sequence belongs to the GLUTAMINE DUMPER 1 (TC 9.B.60) family. Expressed in the vascular tissues, even in the minor veins of the leaves.

It localises to the membrane. Functionally, probable subunit of an amino acid transporter involved in the regulation of the amino acid metabolism. Stimulates amino acid export by activating nonselective amino acid facilitators. In Arabidopsis thaliana (Mouse-ear cress), this protein is Protein GLUTAMINE DUMPER 7 (GDU7).